The primary structure comprises 141 residues: Transcription antitermination protein NusB (141 aa).

Belongs to the NusB family.

Functionally, involved in transcription antitermination. Required for transcription of ribosomal RNA (rRNA) genes. Binds specifically to the boxA antiterminator sequence of the ribosomal RNA (rrn) operons. The chain is Transcription antitermination protein NusB from Neisseria meningitidis serogroup B (strain ATCC BAA-335 / MC58).